We begin with the raw amino-acid sequence, 434 residues long: 3-phosphoshikimate 1-carboxyvinyltransferase (434 aa).

Positions 22, 23, and 27 each coordinate 3-phosphoshikimate. K22 provides a ligand contact to phosphoenolpyruvate. Positions 93 and 121 each coordinate phosphoenolpyruvate. S168, S169, Q170, S199, D320, and K347 together coordinate 3-phosphoshikimate. Q170 contacts phosphoenolpyruvate. D320 functions as the Proton acceptor in the catalytic mechanism. Residues R351, R394, and K419 each contribute to the phosphoenolpyruvate site.

This sequence belongs to the EPSP synthase family. As to quaternary structure, monomer.

The protein resides in the cytoplasm. It carries out the reaction 3-phosphoshikimate + phosphoenolpyruvate = 5-O-(1-carboxyvinyl)-3-phosphoshikimate + phosphate. The protein operates within metabolic intermediate biosynthesis; chorismate biosynthesis; chorismate from D-erythrose 4-phosphate and phosphoenolpyruvate: step 6/7. Functionally, catalyzes the transfer of the enolpyruvyl moiety of phosphoenolpyruvate (PEP) to the 5-hydroxyl of shikimate-3-phosphate (S3P) to produce enolpyruvyl shikimate-3-phosphate and inorganic phosphate. This Burkholderia orbicola (strain MC0-3) protein is 3-phosphoshikimate 1-carboxyvinyltransferase.